Reading from the N-terminus, the 431-residue chain is 5-methylthioadenosine/S-adenosylhomocysteine deaminase (431 aa).

Residues histidine 66 and histidine 68 each coordinate Zn(2+). The substrate site is built by glutamate 95, arginine 147, and histidine 185. Histidine 212 contributes to the Zn(2+) binding site. Positions 215 and 300 each coordinate substrate. Aspartate 300 serves as a coordination point for Zn(2+).

It belongs to the metallo-dependent hydrolases superfamily. MTA/SAH deaminase family. Requires Zn(2+) as cofactor.

It carries out the reaction S-adenosyl-L-homocysteine + H2O + H(+) = S-inosyl-L-homocysteine + NH4(+). The catalysed reaction is S-methyl-5'-thioadenosine + H2O + H(+) = S-methyl-5'-thioinosine + NH4(+). Catalyzes the deamination of 5-methylthioadenosine and S-adenosyl-L-homocysteine into 5-methylthioinosine and S-inosyl-L-homocysteine, respectively. Is also able to deaminate adenosine. This is 5-methylthioadenosine/S-adenosylhomocysteine deaminase from Acetivibrio thermocellus (strain ATCC 27405 / DSM 1237 / JCM 9322 / NBRC 103400 / NCIMB 10682 / NRRL B-4536 / VPI 7372) (Clostridium thermocellum).